The following is a 434-amino-acid chain: Tryptophan synthase beta chain (434 aa).

Residue lysine 92 is modified to N6-(pyridoxal phosphate)lysine. A disordered region spans residues 411–434 (VKGGVATSPESFDASGAKGAGSQS).

The protein belongs to the TrpB family. Tetramer of two alpha and two beta chains. It depends on pyridoxal 5'-phosphate as a cofactor.

The enzyme catalyses (1S,2R)-1-C-(indol-3-yl)glycerol 3-phosphate + L-serine = D-glyceraldehyde 3-phosphate + L-tryptophan + H2O. Its pathway is amino-acid biosynthesis; L-tryptophan biosynthesis; L-tryptophan from chorismate: step 5/5. In terms of biological role, the beta subunit is responsible for the synthesis of L-tryptophan from indole and L-serine. In Polaromonas naphthalenivorans (strain CJ2), this protein is Tryptophan synthase beta chain.